A 560-amino-acid chain; its full sequence is Calnexin homolog (560 aa).

The signal sequence occupies residues 1–22 (MKYGKVSFLALLCSLYVRGSLA). The Lumenal portion of the chain corresponds to 23–489 (DPESEQEPLV…ETIIETPEIG (467 aa)). A disulfide bridge connects residues Cys-132 and Cys-163. An alpha-D-glucoside is bound by residues Tyr-136, Lys-138, Tyr-154, and Asp-161. A p domain (Extended arm) region spans residues 242–375 (IYDPEDIKPA…RKIPNPDYFD (134 aa)). 5 tandem repeats follow at residues 244 to 255 (DPEDIKPADWVD), 261 to 272 (DPNAVKPDDWDE), 280 to 291 (DPDAVKPEDWLE), 299 to 310 (DPEAQKPEDWDD), and 314 to 324 (GDWIPSEIINP). 2 4 X approximate repeats regions span residues 244-310 (DPED…DWDD) and 314-371 (GDWI…IPNP). A disordered region spans residues 253–273 (WVDEPEIPDPNAVKPDDWDED). A disulfide bond links Cys-326 and Cys-332. 3 consecutive repeat copies span residues 333-343 (GEWKPPMIRNP), 347-357 (GPWSPPMIPNP), and 361-371 (GEWYPRKIPNP). Glu-391 is an an alpha-D-glucoside binding site. An N-linked (GlcNAc...) asparagine glycan is attached at Asn-418. Residues 490-512 (IAIVAVLGSLTAVILTCYFYFFA) traverse the membrane as a helical segment. Residues 513–560 (SSSPASLSTGTTEAEKEQQEKFKQETETEKIDVSYAPETESPTAKNED) are Cytoplasmic-facing. Positions 517–560 (ASLSTGTTEAEKEQQEKFKQETETEKIDVSYAPETESPTAKNED) are disordered. Residues 525–544 (EAEKEQQEKFKQETETEKID) are compositionally biased toward basic and acidic residues. Phosphothreonine is present on Thr-551. At Ser-553 the chain carries Phosphoserine. Position 555 is a phosphothreonine (Thr-555).

This sequence belongs to the calreticulin family.

It localises to the endoplasmic reticulum membrane. Functionally, calcium-binding protein that interacts with newly synthesized monoglucosylated glycoproteins in the endoplasmic reticulum. It may act in assisting protein assembly and/or in the retention within the ER of unassembled protein subunits. It seems to play a major role in the quality control apparatus of the ER by the retention of incorrectly folded proteins. The sequence is that of Calnexin homolog (cal1) from Schizosaccharomyces pombe (strain 972 / ATCC 24843) (Fission yeast).